We begin with the raw amino-acid sequence, 318 residues long: NADH-ubiquinone oxidoreductase chain 1 (318 aa).

8 helical membrane passes run 2 to 22 (FMIN…FLTL), 69 to 89 (LLFT…WLPL), 100 to 120 (LGVL…LWSG), 146 to 166 (LAII…TNLI), 171 to 191 (HMWL…STLA), 231 to 251 (IMMM…TPLV), 253 to 273 (GIYT…FLWI), and 285 to 305 (LMHL…MWHV).

The protein belongs to the complex I subunit 1 family. Core subunit of respiratory chain NADH dehydrogenase (Complex I) which is composed of 45 different subunits.

It is found in the mitochondrion inner membrane. It catalyses the reaction a ubiquinone + NADH + 5 H(+)(in) = a ubiquinol + NAD(+) + 4 H(+)(out). Functionally, core subunit of the mitochondrial membrane respiratory chain NADH dehydrogenase (Complex I) which catalyzes electron transfer from NADH through the respiratory chain, using ubiquinone as an electron acceptor. Essential for the catalytic activity and assembly of complex I. This Myrmecophaga tridactyla (Giant anteater) protein is NADH-ubiquinone oxidoreductase chain 1 (MT-ND1).